Reading from the N-terminus, the 502-residue chain is Probable cytosol aminopeptidase (502 aa).

Residues Lys-269 and Asp-274 each contribute to the Mn(2+) site. Lys-281 is a catalytic residue. Mn(2+)-binding residues include Asp-292, Asp-351, and Glu-353. Residue Arg-355 is part of the active site.

Belongs to the peptidase M17 family. Mn(2+) serves as cofactor.

The protein localises to the cytoplasm. The catalysed reaction is Release of an N-terminal amino acid, Xaa-|-Yaa-, in which Xaa is preferably Leu, but may be other amino acids including Pro although not Arg or Lys, and Yaa may be Pro. Amino acid amides and methyl esters are also readily hydrolyzed, but rates on arylamides are exceedingly low.. It carries out the reaction Release of an N-terminal amino acid, preferentially leucine, but not glutamic or aspartic acids.. Its function is as follows. Presumably involved in the processing and regular turnover of intracellular proteins. Catalyzes the removal of unsubstituted N-terminal amino acids from various peptides. The protein is Probable cytosol aminopeptidase of Shewanella sediminis (strain HAW-EB3).